We begin with the raw amino-acid sequence, 144 residues long: Phospholipase A2 (144 aa).

The N-terminal stretch at 1–15 (MKFLVLAALLTAGTA) is a signal peptide. Residues 16 to 22 (ASGVSPT) constitute a propeptide, activation peptide. 7 disulfides stabilise this stretch: Cys33–Cys99, Cys49–Cys144, Cys51–Cys67, Cys66–Cys127, Cys73–Cys120, Cys83–Cys113, and Cys106–Cys118. Ca(2+) contacts are provided by Tyr50, Gly52, and Gly54. Residue His70 is part of the active site. A Ca(2+)-binding site is contributed by Asp71. Residue Asp121 is part of the active site.

It belongs to the phospholipase A2 family. Monomer or homodimer. Ca(2+) serves as cofactor. Activated by trypsin cleavage in the duodenum. Can also be activated by thrombin or autocatalytically.

The protein resides in the secreted. It carries out the reaction a 1,2-diacyl-sn-glycero-3-phosphocholine + H2O = a 1-acyl-sn-glycero-3-phosphocholine + a fatty acid + H(+). It catalyses the reaction 1,2-ditetradecanoyl-sn-glycero-3-phosphocholine + H2O = 1-tetradecanoyl-sn-glycero-3-phosphocholine + tetradecanoate + H(+). The catalysed reaction is 1,2-dihexadecanoyl-sn-glycero-3-phosphocholine + H2O = 1-hexadecanoyl-sn-glycero-3-phosphocholine + hexadecanoate + H(+). The enzyme catalyses 1-hexadecanoyl-2-(9Z-octadecenoyl)-sn-glycero-3-phosphocholine + H2O = 1-hexadecanoyl-sn-glycero-3-phosphocholine + (9Z)-octadecenoate + H(+). It carries out the reaction 1-hexadecanoyl-2-(5Z,8Z,11Z,14Z-eicosatetraenoyl)-sn-glycero-3-phosphocholine + H2O = 1-hexadecanoyl-sn-glycero-3-phosphocholine + (5Z,8Z,11Z,14Z)-eicosatetraenoate + H(+). It catalyses the reaction 1-hexadecanoyl-2-(9Z-octadecenoyl)-sn-glycero-3-phospho-(1'-sn-glycerol) + H2O = 1-hexadecanoyl-sn-glycero-3-phospho-(1'-sn-glycerol) + (9Z)-octadecenoate + H(+). The catalysed reaction is N-hexadecanoyl-1,2-di-(9Z-octadecenoyl)-sn-glycero-3-phosphoethanolamine + H2O = N-hexadecanoyl-1-(9Z-octadecenoyl)-sn-glycero-3-phosphoethanolamine + (9Z)-octadecenoate + H(+). The enzyme catalyses 1-hexadecanoyl-2-(9Z,12Z-octadecadienoyl)-sn-glycero-3-phosphoethanolamine + H2O = 1-hexadecanoyl-sn-glycero-3-phosphoethanolamine + (9Z,12Z)-octadecadienoate + H(+). It carries out the reaction N,1-dihexadecanoyl-2-(9Z,12Z-octadecadienoyl)-sn-glycero-3-phosphoethanolamine + H2O = N,1-dihexadecanoyl-sn-glycero-3-phosphoethanolamine + (9Z,12Z)-octadecadienoate + H(+). In terms of biological role, secretory calcium-dependent phospholipase A2 that primarily targets dietary phospholipids in the intestinal tract. Hydrolyzes the ester bond of the fatty acyl group attached at sn-2 position of phospholipids (phospholipase A2 activity) with preference for phosphatidylethanolamines and phosphatidylglycerols over phosphatidylcholines. May play a role in the biosynthesis of N-acyl ethanolamines that regulate energy metabolism and inflammation in the intestinal tract. Hydrolyzes N-acyl phosphatidylethanolamines to N-acyl lysophosphatidylethanolamines, which are further cleaved by a lysophospholipase D to release N-acyl ethanolamines. May act in an autocrine and paracrine manner. Has anti-helminth activity in a process regulated by gut microbiota. Upon helminth infection of intestinal epithelia, directly affects phosphatidylethanolamine contents in the membrane of helminth larvae, likely controlling an array of phospholipid-mediated cellular processes such as membrane fusion and cell division while providing for better immune recognition, ultimately reducing larvae integrity and infectivity. This chain is Phospholipase A2 (PLA2G1B), found in Oryctolagus cuniculus (Rabbit).